A 507-amino-acid chain; its full sequence is Putative pentatricopeptide repeat-containing protein At3g16710, mitochondrial (507 aa).

A mitochondrion-targeting transit peptide spans 1–48 (MRRSIATGFASIVKGFHLHSHRHRLQISNPRTAASLSLCGFCFWIRAF). PPR repeat units follow at residues 47–81 (AFSSYRKILRNGLHNLQFNDALDLFTRMVHSRPLP), 82–116 (SIIDFTRLLSVIAKMNRYDVVISLFEQMQILGIPP), 117–151 (LLCTCNIVMHCVCLSSQPCRASCFLGKMMKLGFEP), 152–186 (DLVTFTSLLNGYCHWNRIEDAIALFDQILGMGFKP), 187–221 (NVVTYTTLIRCLCKNRHLNHAVELFNQMGTNGSRP), 222–256 (NVVTYNALVTGLCEIGRWGDAAWLLRDMMKRRIEP), 257–291 (NVITFTALIDAFVKVGKLMEAKELYNVMIQMSVYP), 292–326 (DVFTYGSLINGLCMYGLLDEARQMFYLMERNGCYP), 327–361 (NEVIYTTLIHGFCKSKRVEDGMKIFYEMSQKGVVA), 362–396 (NTITYTVLIQGYCLVGRPDVAQEVFNQMSSRRAPP), 397–431 (DIRTYNVLLDGLCCNGKVEKALMIFEYMRKREMDI), 432–466 (NIVTYTIIIQGMCKLGKVEDAFDLFCSLFSKGMKP), and 467–501 (NVITYTTMISGFCRRGLIHEADSLFKKMKEDGFLP).

It belongs to the PPR family. P subfamily.

The protein resides in the mitochondrion. The sequence is that of Putative pentatricopeptide repeat-containing protein At3g16710, mitochondrial from Arabidopsis thaliana (Mouse-ear cress).